The chain runs to 894 residues: E3 ubiquitin-protein ligase SH3RF1 (894 aa).

The segment at 12–53 (CPVCLERLDASAKVLPCQHTFCKRCLLGIVGSRNELRCPECR) adopts an RING-type zinc-finger fold. SH3 domains lie at 134-193 (PQLP…IIKP) and 196-259 (QPPP…FNSA). Residues 274-323 (VDTAECPSATAAQSSSASKHSDTKKNTRKRHSFTSLTMANKSSQASQNRH) form a disordered region. Residues 281 to 291 (SATAAQSSSAS) are compositionally biased toward low complexity. Residues 293-363 (HSDTKKNTRK…APSQVHISTT (71 aa)) form an interaction with RAC1 region. Serine 305 carries the phosphoserine modification. A compositionally biased stretch (polar residues) spans 306 to 322 (FTSLTMANKSSQASQNR). The tract at residues 448-551 (HLRPQTRPSV…STAGGPAQKP (104 aa)) is interaction with AKT2. Residues 453–514 (TRPSVYVAIY…PGNYVAPVTR (62 aa)) form the SH3 3 domain. Disordered regions lie at residues 526 to 556 (MSTA…GNGV) and 682 to 751 (LETE…PTLD). At serine 540 the chain carries Phosphoserine. Over residues 700 to 713 (SPESAASACGNSSA) the composition is skewed to polar residues. Over residues 715 to 726 (KPDKDSKKEKKG) the composition is skewed to basic and acidic residues. A Phosphoserine modification is found at serine 743. The SH3 4 domain maps to 835 to 894 (VVCERHRVVVSYPPQSEAELELKEGDIVFVHKKREDGWFKGTLQRNGKTGLFPGSFVENI).

This sequence belongs to the SH3RF family. As to quaternary structure, interacts with HERP1. Interacts with RAC1; in a GTP-dependent manner. Interacts with MAP3K10/MLK2 and MAP3K11/MLK3. Interacts with MAPK8IP; this interaction leads to the PJAC complex (POSH-JIP or SH3RF1/MAPK8IP apoptotic complex) with a 1:1 ratio. Interacts with SIAH1. Probably part of a signaling complex that may contain SH3RF1, MAPK8IP, DLK1, MAP2K4/MKK4, MAP2K7/MKK7, MAPK8/JNK1, MAPK9/JNK2, AKT1 and AKT2. Found in a complex with RAC2, MAP3K7/TAK1, MAP2K7/MKK7, MAPK8IP1/JIP1, MAPK8/JNK1 and MAPK9/JNK2. Found in a complex with RAC1, MAP3K11/MLK3, MAP2K7/MKK7, MAPK8IP1/JIP1 and MAPK8/JNK1. Interacts with SH3RF2. Phosphorylated at Ser-305 by AKT1 and AKT2. When phosphorylated, it has reduced ability to bind Rac. In terms of processing, autoubiquitinated. Ubiquitinated by SH3RF2, leading to proteasome-mediated degradation.

Its subcellular location is the cytoplasm. The protein localises to the perinuclear region. The protein resides in the cell projection. It is found in the lamellipodium. It localises to the golgi apparatus. Its subcellular location is the trans-Golgi network. The catalysed reaction is S-ubiquitinyl-[E2 ubiquitin-conjugating enzyme]-L-cysteine + [acceptor protein]-L-lysine = [E2 ubiquitin-conjugating enzyme]-L-cysteine + N(6)-ubiquitinyl-[acceptor protein]-L-lysine.. It participates in protein modification; protein ubiquitination. Its function is as follows. Has E3 ubiquitin-protein ligase activity. In the absence of an external substrate, it can catalyze self-ubiquitination. Stimulates ubiquitination of potassium channel KCNJ1, enhancing it's dynamin-dependent and clathrin-independent endocytosis. Acts as a scaffold protein that coordinates with MAPK8IP1/JIP1 in organizing different components of the JNK pathway, including RAC1 or RAC2, MAP3K11/MLK3 or MAP3K7/TAK1, MAP2K7/MKK7, MAPK8/JNK1 and/or MAPK9/JNK2 into a functional multiprotein complex to ensure the effective activation of the JNK signaling pathway. Regulates the differentiation of CD4(+) and CD8(+) T-cells and promotes T-helper 1 (Th1) cell differentiation. Regulates the activation of MAPK8/JNK1 and MAPK9/JNK2 in CD4(+) T-cells and the activation of MAPK8/JNK1 in CD8(+) T-cells. Plays a crucial role in the migration of neocortical neurons in the developing brain. Controls proper cortical neuronal migration and the formation of proximal cytoplasmic dilation in the leading process (PCDLP) in migratory neocortical neurons by regulating the proper localization of activated RAC1 and F-actin assembly. In Rattus norvegicus (Rat), this protein is E3 ubiquitin-protein ligase SH3RF1 (Sh3rf1).